The sequence spans 443 residues: Mitochondrial distribution and morphology protein 10 (443 aa).

The protein belongs to the MDM10 family. Component of the ER-mitochondria encounter structure (ERMES) or MDM complex, composed of MMM1, MDM10, MDM12 and MDM34. Associates with the mitochondrial outer membrane sorting assembly machinery SAM(core) complex.

It localises to the mitochondrion outer membrane. Its function is as follows. Component of the ERMES/MDM complex, which serves as a molecular tether to connect the endoplasmic reticulum and mitochondria. Components of this complex are involved in the control of mitochondrial shape and protein biogenesis and may function in phospholipid exchange. MDM10 is involved in the late assembly steps of the general translocase of the mitochondrial outer membrane (TOM complex). Functions in the TOM40-specific route of the assembly of outer membrane beta-barrel proteins, including the association of TOM40 with the receptor TOM22 and small TOM proteins. Can associate with the SAM(core) complex as well as the MDM12-MMM1 complex, both involved in late steps of the major beta-barrel assembly pathway, that is responsible for biogenesis of all outer membrane beta-barrel proteins. May act as a switch that shuttles between both complexes and channels precursor proteins into the TOM40-specific pathway. Plays a role in mitochondrial morphology and in the inheritance of mitochondria. The polypeptide is Mitochondrial distribution and morphology protein 10 (Pyricularia oryzae (strain 70-15 / ATCC MYA-4617 / FGSC 8958) (Rice blast fungus)).